The following is a 156-amino-acid chain: Rhombotin-1 (156 aa).

2 LIM zinc-binding domains span residues 22 to 84 (KGCA…LFGT) and 86 to 148 (GNCA…GQLN).

It localises to the nucleus. In terms of biological role, may be involved in gene regulation within neural lineage cells potentially by direct DNA binding or by binding to other transcription factors. In Xenopus laevis (African clawed frog), this protein is Rhombotin-1.